The sequence spans 378 residues: Protein-glutamate methylesterase/protein-glutamine glutaminase 2 (378 aa).

Residues 4–121 (KVLVVDDSGF…SRNPEKVKQL (118 aa)) form the Response regulatory domain. Position 55 is a 4-aspartylphosphate (Asp55). Residues 141–188 (APAPAAAPTPAPIPAAAPSSFGSHSAPARPAPAPAPTRAPAASASSPA) form a disordered region. The segment covering 145–155 (AAAPTPAPIPA) has biased composition (pro residues). Composition is skewed to low complexity over residues 156 to 168 (AAPS…SAPA) and 178 to 188 (RAPAASASSPA). In terms of domain architecture, CheB-type methylesterase spans 187–378 (PAPKRKNYKL…IGKHIVEACV (192 aa)). Catalysis depends on residues Ser202, His229, and Asp322.

Belongs to the CheB family. In terms of processing, phosphorylated by CheA. Phosphorylation of the N-terminal regulatory domain activates the methylesterase activity.

The protein resides in the cytoplasm. It catalyses the reaction [protein]-L-glutamate 5-O-methyl ester + H2O = L-glutamyl-[protein] + methanol + H(+). The enzyme catalyses L-glutaminyl-[protein] + H2O = L-glutamyl-[protein] + NH4(+). In terms of biological role, involved in chemotaxis. Part of a chemotaxis signal transduction system that modulates chemotaxis in response to various stimuli. Catalyzes the demethylation of specific methylglutamate residues introduced into the chemoreceptors (methyl-accepting chemotaxis proteins or MCP) by CheR. Also mediates the irreversible deamidation of specific glutamine residues to glutamic acid. In Pseudomonas fluorescens (strain Pf0-1), this protein is Protein-glutamate methylesterase/protein-glutamine glutaminase 2.